Reading from the N-terminus, the 282-residue chain is Putative 4-diphosphocytidyl-2-C-methyl-D-erythritol kinase (282 aa).

The active site involves Lys-9. 93–103 (PVSAGLAGGSA) provides a ligand contact to ATP. Asp-135 is a catalytic residue.

It belongs to the GHMP kinase family. IspE subfamily.

It carries out the reaction 4-CDP-2-C-methyl-D-erythritol + ATP = 4-CDP-2-C-methyl-D-erythritol 2-phosphate + ADP + H(+). In terms of biological role, catalyzes the phosphorylation of the position 2 hydroxy group of 4-diphosphocytidyl-2C-methyl-D-erythritol. The protein is Putative 4-diphosphocytidyl-2-C-methyl-D-erythritol kinase of Staphylococcus haemolyticus (strain JCSC1435).